A 341-amino-acid polypeptide reads, in one-letter code: NADH-quinone oxidoreductase subunit H 1 (341 aa).

The next 9 membrane-spanning stretches (helical) occupy residues 7–27 (IILTIAAQGLLVIAFVMISLL), 46–66 (PNVVGAFGLLQTVADAAKYIF), 80–100 (FFLAPLISFVLAVLAWAVIPF), 111–131 (VAILFVFAASSLEVYGVIMGG), 157–177 (LGLIIIGIIISTGSMNLSHIV), 183–203 (AFGLFNWYWLPHLPMVALFFI), 244–264 (YIAIFLMCALMSLLFFGGWLS), 273–293 (VFWMVAKMAFFFFLFAMVKAI), and 305–325 (IGWKVFLPFSLGWVVLVAFLA).

Belongs to the complex I subunit 1 family. In terms of assembly, NDH-1 is composed of 14 different subunits. Subunits NuoA, H, J, K, L, M, N constitute the membrane sector of the complex.

It is found in the cell inner membrane. It catalyses the reaction a quinone + NADH + 5 H(+)(in) = a quinol + NAD(+) + 4 H(+)(out). NDH-1 shuttles electrons from NADH, via FMN and iron-sulfur (Fe-S) centers, to quinones in the respiratory chain. The immediate electron acceptor for the enzyme in this species is believed to be ubiquinone. Couples the redox reaction to proton translocation (for every two electrons transferred, four hydrogen ions are translocated across the cytoplasmic membrane), and thus conserves the redox energy in a proton gradient. This subunit may bind ubiquinone. The sequence is that of NADH-quinone oxidoreductase subunit H 1 from Cereibacter sphaeroides (strain ATCC 17029 / ATH 2.4.9) (Rhodobacter sphaeroides).